Here is a 699-residue protein sequence, read N- to C-terminus: Elongation factor G (699 aa).

In terms of domain architecture, tr-type G spans E8–V290. GTP-binding positions include A17–T24, D88–H92, and N142–D145.

The protein belongs to the TRAFAC class translation factor GTPase superfamily. Classic translation factor GTPase family. EF-G/EF-2 subfamily.

Its subcellular location is the cytoplasm. In terms of biological role, catalyzes the GTP-dependent ribosomal translocation step during translation elongation. During this step, the ribosome changes from the pre-translocational (PRE) to the post-translocational (POST) state as the newly formed A-site-bound peptidyl-tRNA and P-site-bound deacylated tRNA move to the P and E sites, respectively. Catalyzes the coordinated movement of the two tRNA molecules, the mRNA and conformational changes in the ribosome. The polypeptide is Elongation factor G (Alkalilimnicola ehrlichii (strain ATCC BAA-1101 / DSM 17681 / MLHE-1)).